A 58-amino-acid polypeptide reads, in one-letter code: Large ribosomal subunit protein uL30 (58 aa).

This sequence belongs to the universal ribosomal protein uL30 family. Part of the 50S ribosomal subunit.

The sequence is that of Large ribosomal subunit protein uL30 from Blochmanniella floridana.